We begin with the raw amino-acid sequence, 1530 residues long: Regulating synaptic membrane exocytosis protein 2 (1530 aa).

The disordered stretch occupies residues 1 to 34 (MSAPLGPRGRPAPTPAASQPPPQPEMPDLSHLTE). A compositionally biased stretch (pro residues) spans 10-25 (RPAPTPAASQPPPQPE). One can recognise a RabBD domain in the interval 26-194 (MPDLSHLTEE…TKSGAWFYNS (169 aa)). The FYVE-type zinc-finger motif lies at 126-182 (KGDAPTCGICHKTKFADGCGHNCSYCQTKFCARCGGRVSLRSNKVMWVCNLCRKQQE). 8 residues coordinate Zn(2+): cysteine 132, cysteine 135, cysteine 148, cysteine 151, cysteine 156, cysteine 159, cysteine 174, and cysteine 177. Disordered stretches follow at residues 195-608 (GSNT…ERQK) and 632-655 (SGVDTCSSTTLNEEHSHSDKHPVT). Basic and acidic residues-rich tracts occupy residues 210–225 (LRNEEAPQEKKAKLHE), 327–338 (EPGHLNYRDSNR), 357–375 (RDEYERQRREEEYQARYRS), 391–410 (EQMRIHAEVSRARHERRHSD), and 419–443 (EDSRISLLRMDRPSRQRSVSERRAA). Serine 409 is subject to Phosphoserine. A compositionally biased stretch (polar residues) spans 458–472 (AQGQSSYPQRTSNHS). The span at 484–501 (DRPDMRRADSLRKQHHLD) shows a compositional bias: basic and acidic residues. Residues 519–530 (RNDSLSSDQSES) show a composition bias toward polar residues. Residues 537–546 (RPHKSKKGGK) are compositionally biased toward basic residues. Residues 567 to 577 (SCDDVELESES) are compositionally biased toward acidic residues. 2 stretches are compositionally biased toward basic and acidic residues: residues 578–592 (VSEKGDSQKGKRKTS) and 643–653 (NEEHSHSDKHP). The region spanning 677–763 (DGSVPRDSGA…EPQVELVVSR (87 aa)) is the PDZ domain. At threonine 698 the chain carries Phosphothreonine. Residues 771–802 (IPDSTHAQLESSSSSFESQKMDRPSISVTSPM) are disordered. A phosphoserine mark is found at serine 800 and serine 803. In terms of domain architecture, C2 1 spans 814–937 (LSGQLSIKLW…ALLDDEPHWY (124 aa)). Disordered stretches follow at residues 948-982 (PLPRPSPYLPRRQLHGESPTRRLQRSKRISDSEVS), 1003-1122 (LQSS…ERSA), 1130-1149 (RQMKLNKYKQVAGSDPRLEQ), 1154-1187 (KYRSGWDPHRGADTVSTKSSDSDVSDVSAVSRTS), 1242-1263 (SLEKNDGSQSDTAVGALGTSGK), and 1282-1307 (KSRSASQLSQTEGGGKKLRSTVQRST). The segment covering 1003–1024 (LQSSTLSVPEQVMSSNHCSPSG) has biased composition (polar residues). Basic and acidic residues predominate over residues 1067–1086 (RMDRHRVMDDHYSSDRDRSH). Residues 1088–1101 (RTGSVQTSPSSTPG) show a composition bias toward polar residues. Serine 1095 bears the Phosphoserine mark. Basic and acidic residues predominate over residues 1154 to 1165 (KYRSGWDPHRGA). Serine 1175 bears the Phosphoserine mark. Residues 1178–1187 (SDVSAVSRTS) show a composition bias toward low complexity. Serine 1251 bears the Phosphoserine mark. In terms of domain architecture, C2 2 spans 1376-1494 (AMGDIQVGMM…ELSNMVIGWF (119 aa)). Residues serine 1515 and serine 1518 each carry the phosphoserine modification.

In terms of assembly, interacts with TSPOAP1 and RIMBP2. Interacts with PPFIA3 and PPFIA4. Interacts via its zinc finger with the first C2 domain of UNC13A. Forms a complex consisting of UNC13A, RIMS2 and RAB3A. Heterodimer with PCLO. Part of a ternary complex involving PCLO and EPAC2. Interacts with RAB3A and RAB3B that have been activated by GTP-binding. Interacts with RAB3C, RAB3D and RAB26. Detected in testis, pituitary and an insulinoma cell line. Detected at low levels in cerebellar cortex.

The protein resides in the synapse. Its subcellular location is the synaptosome. In terms of biological role, rab effector involved in exocytosis. May act as scaffold protein. Plays a role in dendrite formation by melanocytes. In Mus musculus (Mouse), this protein is Regulating synaptic membrane exocytosis protein 2 (Rims2).